A 120-amino-acid chain; its full sequence is Large ribosomal subunit protein bL17 (120 aa).

Belongs to the bacterial ribosomal protein bL17 family. Part of the 50S ribosomal subunit. Contacts protein L32.

This is Large ribosomal subunit protein bL17 from Anoxybacillus flavithermus (strain DSM 21510 / WK1).